The following is a 190-amino-acid chain: Adenylate kinase (190 aa).

Residue Gly12–Thr17 participates in ATP binding. Residues Ser34–Val63 form an NMP region. Residues Thr35, Arg40, Asn61–Val63, Gly88–Arg91, and Gln95 each bind AMP. Residues Gly130–Asp136 are LID. Arg131 provides a ligand contact to ATP. Arg133 and Arg145 together coordinate AMP. Arg173 contacts ATP.

It belongs to the adenylate kinase family. As to quaternary structure, monomer.

It is found in the cytoplasm. It catalyses the reaction AMP + ATP = 2 ADP. Its pathway is purine metabolism; AMP biosynthesis via salvage pathway; AMP from ADP: step 1/1. Functionally, catalyzes the reversible transfer of the terminal phosphate group between ATP and AMP. Plays an important role in cellular energy homeostasis and in adenine nucleotide metabolism. This chain is Adenylate kinase, found in Wolinella succinogenes (strain ATCC 29543 / DSM 1740 / CCUG 13145 / JCM 31913 / LMG 7466 / NCTC 11488 / FDC 602W) (Vibrio succinogenes).